Consider the following 99-residue polypeptide: Integration host factor subunit alpha (99 aa).

The protein belongs to the bacterial histone-like protein family. In terms of assembly, heterodimer of an alpha and a beta chain.

In terms of biological role, this protein is one of the two subunits of integration host factor, a specific DNA-binding protein that functions in genetic recombination as well as in transcriptional and translational control. This chain is Integration host factor subunit alpha (ihfA), found in Mannheimia haemolytica (Pasteurella haemolytica).